Here is a 512-residue protein sequence, read N- to C-terminus: NADH-quinone oxidoreductase subunit N 2 (512 aa).

14 helical membrane passes run 23-43 (AFVP…IDLF), 50-70 (TIIP…VYLQ), 88-108 (FAIF…LISI), 120-140 (SLGE…LMAS), 144-164 (LLMM…LVGY), 179-199 (VIYG…IYGL), 220-240 (ITLM…AGVV), 254-274 (PTPI…AMLI), 295-315 (WVTL…VVAL), 323-343 (LLAY…IVAD), 351-371 (LFYL…IILI), 394-414 (AASL…VGFI), 429-449 (VFVW…YFYF), and 477-497 (LVAF…PLSV).

It belongs to the complex I subunit 2 family. In terms of assembly, NDH-1 is composed of 14 different subunits. Subunits NuoA, H, J, K, L, M, N constitute the membrane sector of the complex.

It is found in the cell inner membrane. The enzyme catalyses a quinone + NADH + 5 H(+)(in) = a quinol + NAD(+) + 4 H(+)(out). NDH-1 shuttles electrons from NADH, via FMN and iron-sulfur (Fe-S) centers, to quinones in the respiratory chain. The immediate electron acceptor for the enzyme in this species is believed to be a menaquinone. Couples the redox reaction to proton translocation (for every two electrons transferred, four hydrogen ions are translocated across the cytoplasmic membrane), and thus conserves the redox energy in a proton gradient. This Chloroherpeton thalassium (strain ATCC 35110 / GB-78) protein is NADH-quinone oxidoreductase subunit N 2.